Consider the following 116-residue polypeptide: ATP-dependent Clp protease adapter protein ClpS (116 aa).

Residues 1–11 (MRRINTIMQGK) show a composition bias toward polar residues. The disordered stretch occupies residues 1–23 (MRRINTIMQGKTNGGNGPESGTV).

It belongs to the ClpS family. Binds to the N-terminal domain of the chaperone ClpA.

Its function is as follows. Involved in the modulation of the specificity of the ClpAP-mediated ATP-dependent protein degradation. The chain is ATP-dependent Clp protease adapter protein ClpS from Brucella abortus (strain S19).